A 39-amino-acid polypeptide reads, in one-letter code: Larval cuticle protein SC6 (39 aa).

Positions 15 to 39 (VDQFKYGLELDNSIKADQEGHLEGD) constitute a Chitin-binding type R&amp;R domain.

In terms of biological role, component of the cuticle of the larva of flesh fly. The polypeptide is Larval cuticle protein SC6 (Sarcophaga bullata (Grey flesh fly)).